We begin with the raw amino-acid sequence, 647 residues long: tRNA 5-methylaminomethyl-2-thiouridine biosynthesis bifunctional protein MnmC (647 aa).

Positions 1-235 (MSIPPFSQAS…KRDMLCGRFT (235 aa)) are tRNA (mnm(5)s(2)U34)-methyltransferase. The tract at residues 250–647 (IGGGIAGTAS…RGLACHPLRR (398 aa)) is FAD-dependent cmnm(5)s(2)U34 oxidoreductase.

In the N-terminal section; belongs to the methyltransferase superfamily. tRNA (mnm(5)s(2)U34)-methyltransferase family. This sequence in the C-terminal section; belongs to the DAO family. Requires FAD as cofactor.

The protein localises to the cytoplasm. The catalysed reaction is 5-aminomethyl-2-thiouridine(34) in tRNA + S-adenosyl-L-methionine = 5-methylaminomethyl-2-thiouridine(34) in tRNA + S-adenosyl-L-homocysteine + H(+). Its function is as follows. Catalyzes the last two steps in the biosynthesis of 5-methylaminomethyl-2-thiouridine (mnm(5)s(2)U) at the wobble position (U34) in tRNA. Catalyzes the FAD-dependent demodification of cmnm(5)s(2)U34 to nm(5)s(2)U34, followed by the transfer of a methyl group from S-adenosyl-L-methionine to nm(5)s(2)U34, to form mnm(5)s(2)U34. In Methylobacillus flagellatus (strain ATCC 51484 / DSM 6875 / VKM B-1610 / KT), this protein is tRNA 5-methylaminomethyl-2-thiouridine biosynthesis bifunctional protein MnmC.